The sequence spans 139 residues: uncharacterized protein (139 aa).

Transmembrane regions (helical) follow at residues 71 to 91 (LFSA…ATLL) and 97 to 117 (ENEL…FVMV).

The protein belongs to the RseC family.

The protein localises to the cell inner membrane. This is an uncharacterized protein from Haemophilus influenzae (strain ATCC 51907 / DSM 11121 / KW20 / Rd).